We begin with the raw amino-acid sequence, 224 residues long: MKLGGIDEAGRGPVVGPLVIAAVVIDESKIEKFEALGVKDSKKLSPKKREELFEKIIELVDDYFILELSPEDIDKREGTMNDFEVENFAKVLNSLKIKPDLVYIDAADVNEERFGIVVREKLSFYPKIIAEHKADSKYIPVAAASILAKVTRDKAIERLKEIYGNIGSGYPSDPITRKFLEEYYKEHGSFPPVVRRSWKTLKKIEEKLQKEKNQSNLLNFLKKS.

The RNase H type-2 domain maps to 1–210 (MKLGGIDEAG…LKKIEEKLQK (210 aa)). Positions 7, 8, and 105 each coordinate a divalent metal cation.

It belongs to the RNase HII family. Mn(2+) is required as a cofactor. Mg(2+) serves as cofactor.

The protein resides in the cytoplasm. The catalysed reaction is Endonucleolytic cleavage to 5'-phosphomonoester.. Functionally, endonuclease that specifically degrades the RNA of RNA-DNA hybrids. This Thermococcus sibiricus (strain DSM 12597 / MM 739) protein is Ribonuclease HII.